Here is a 278-residue protein sequence, read N- to C-terminus: Mediator of RNA polymerase II transcription subunit 4 (278 aa).

Positions 57–88 form a coiled coil; it reads HARILTLRAQVEALEEQKKSSVTALATLRHEL. Disordered regions lie at residues 120–181 and 240–278; these read VPPT…EEEE and VEAP…DLDD. Basic and acidic residues-rich tracts occupy residues 124 to 142 and 160 to 172; these read YRER…KDDA and DAPK…DNKP. Residues 250-268 are compositionally biased toward low complexity; it reads AEPVQAQAPRPARPAQPQA.

It belongs to the Mediator complex subunit 4 family. In terms of assembly, component of the Mediator complex.

The protein resides in the nucleus. Component of the Mediator complex, a coactivator involved in the regulated transcription of nearly all RNA polymerase II-dependent genes. Mediator functions as a bridge to convey information from gene-specific regulatory proteins to the basal RNA polymerase II transcription machinery. Mediator is recruited to promoters by direct interactions with regulatory proteins and serves as a scaffold for the assembly of a functional preinitiation complex with RNA polymerase II and the general transcription factors. The sequence is that of Mediator of RNA polymerase II transcription subunit 4 (MED4) from Phaeosphaeria nodorum (strain SN15 / ATCC MYA-4574 / FGSC 10173) (Glume blotch fungus).